A 245-amino-acid polypeptide reads, in one-letter code: MKTEGRQMPHKSTILPFLIKFAPNSPQFTYDCDQCLNVYAFDLDHTIIKPKSPNAKYSRSANDWQFMNFDSKKSTLDYLFSITDNDLAAVIVIFSNQGGVITVPRTSKSCSKYINKISLFLKAIENDKRGEKLSPRLWIYAAPKRPKTVVTNNKKITFPSLCKSYNNDPEIFEKVRKPMTGMADFFRIDITDACRVLKTVPPIKLNWVYYCGDAAGRKNDFSDSDIKFAEKLHVEFKYPEEVFQG.

The protein belongs to the DNA 3' phosphatase family.

It is found in the nucleus. The enzyme catalyses a 3'end (2'-deoxyribonucleotide 3'-phosphate)-DNA + H2O = a 3'-end 2'-deoxyribonucleotide-DNA + phosphate. Its function is as follows. Dephosphorylate DNA's 3'-phosphate termini. Has a role in the repair of breaks in single-stranded DNA. This Saccharomyces mikatae (Yeast) protein is Polynucleotide 3'-phosphatase (TPP1).